Reading from the N-terminus, the 132-residue chain is MDVTRLLLATLLVFLCFFTAYSHLPPEEKLRDDRSLRSNSSVNLLDFPSVSIMALNKNSKEISRKEAEKKRSSKKEASMKKVARPRTPLSAPCVATRDSCKPPAPACCDPCASCQCRFFRSACSCRVLSLNC.

Residues 1–22 (MDVTRLLLATLLVFLCFFTAYS) form the signal peptide. N-linked (GlcNAc...) asparagine glycosylation occurs at N39. The segment covering 61-79 (EISRKEAEKKRSSKKEASM) has biased composition (basic and acidic residues). The disordered stretch occupies residues 61 to 87 (EISRKEAEKKRSSKKEASMKKVARPRT). Intrachain disulfides connect C93-C108, C100-C114, C107-C125, C111-C132, and C116-C123. The Agouti domain occupies 93-132 (CVATRDSCKPPAPACCDPCASCQCRFFRSACSCRVLSLNC).

Its subcellular location is the secreted. Involved in the regulation of melanogenesis. The binding of ASP to MC1R precludes alpha-MSH initiated signaling and thus blocks production of cAMP, leading to a down-regulation of eumelanogenesis (brown/black pigment) and thus increasing synthesis of pheomelanin (yellow/red pigment). This chain is Agouti-signaling protein (ASIP), found in Macaca fascicularis (Crab-eating macaque).